Reading from the N-terminus, the 453-residue chain is Bis(5'-adenosyl)-triphosphatase ENPP4 (453 aa).

The N-terminal stretch at 1-15 (MKLLVILLFSGLITG) is a signal peptide. Topologically, residues 16 to 407 (FRSDSSSSLP…DQWCINLPEA (392 aa)) are extracellular. Positions 34 and 70 each coordinate Zn(2+). Residue Thr-70 is the AMP-threonine intermediate of the active site. Asn-91 and Tyr-154 together coordinate substrate. N-linked (GlcNAc...) asparagine glycosylation is found at Asn-155 and Asn-166. Zn(2+) contacts are provided by Asp-189, His-193, Asp-237, and His-238. Asp-189 is a binding site for substrate. An intrachain disulfide couples Cys-254 to Cys-287. Asn-276 is a glycosylation site (N-linked (GlcNAc...) asparagine). Residue His-336 coordinates Zn(2+). Asn-386 carries N-linked (GlcNAc...) asparagine glycosylation. Cysteines 394 and 401 form a disulfide. Residues 408–428 (IAIVIGSLLVLTMLTCLIIIM) traverse the membrane as a helical segment. Residues 429–453 (QNRLSVPRPFSRLQLQEDDDDPLIG) lie on the Cytoplasmic side of the membrane.

It belongs to the nucleotide pyrophosphatase/phosphodiesterase family. The cofactor is Zn(2+). In terms of tissue distribution, expressed on the surface of vascular endothelia.

The protein resides in the cell membrane. The enzyme catalyses P(1),P(3)-bis(5'-adenosyl) triphosphate + H2O = AMP + ADP + 2 H(+). Functionally, hydrolyzes extracellular Ap3A into AMP and ADP, and Ap4A into AMP and ATP. Ap3A and Ap4A are diadenosine polyphosphates thought to induce proliferation of vascular smooth muscle cells. Acts as a procoagulant, mediating platelet aggregation at the site of nascent thrombus via release of ADP from Ap3A and activation of ADP receptors. This chain is Bis(5'-adenosyl)-triphosphatase ENPP4 (ENPP4), found in Homo sapiens (Human).